The following is a 386-amino-acid chain: S-adenosylmethionine synthase (386 aa).

Position 17 (histidine 17) interacts with ATP. Aspartate 19 contributes to the Mg(2+) binding site. Glutamate 45 serves as a coordination point for K(+). The L-methionine site is built by glutamate 58 and glutamine 101. The interval 101–111 is flexible loop; that stretch reads QSPDISQGVTE. ATP-binding positions include 168-170, aspartate 242, 248-249, alanine 265, and lysine 269; these read DAK and RK. Position 242 (aspartate 242) interacts with L-methionine. Position 273 (lysine 273) interacts with L-methionine.

The protein belongs to the AdoMet synthase family. Homotetramer; dimer of dimers. Requires Mg(2+) as cofactor. K(+) is required as a cofactor.

The protein resides in the cytoplasm. The enzyme catalyses L-methionine + ATP + H2O = S-adenosyl-L-methionine + phosphate + diphosphate. Its pathway is amino-acid biosynthesis; S-adenosyl-L-methionine biosynthesis; S-adenosyl-L-methionine from L-methionine: step 1/1. Its function is as follows. Catalyzes the formation of S-adenosylmethionine (AdoMet) from methionine and ATP. The overall synthetic reaction is composed of two sequential steps, AdoMet formation and the subsequent tripolyphosphate hydrolysis which occurs prior to release of AdoMet from the enzyme. This is S-adenosylmethionine synthase from Leptospira borgpetersenii serovar Hardjo-bovis (strain JB197).